Here is a 54-residue protein sequence, read N- to C-terminus: Light-harvesting protein B-880 beta chain (54 aa).

The Cytoplasmic portion of the chain corresponds to 1–20; that stretch reads AEDRSSLSGVSDAEAKEFHA. Positions 19 and 37 each coordinate a bacteriochlorophyll. The helical transmembrane segment at 21 to 43 threads the bilayer; sequence LFVSSFMGFMVVAVLAHVLAWAW. Residues 44 to 54 lie on the Periplasmic side of the membrane; the sequence is RPWIPGPKGWA.

This sequence belongs to the antenna complex beta subunit family. As to quaternary structure, the core complex is formed by different alpha and beta chains, binding bacteriochlorophyll molecules, and arranged most probably in tetrameric structures disposed around the reaction center. The non-pigmented gamma chains may constitute additional components.

The protein resides in the cell inner membrane. Functionally, antenna complexes are light-harvesting systems, which transfer the excitation energy to the reaction centers. The polypeptide is Light-harvesting protein B-880 beta chain (Rhodoblastus acidophilus (Rhodopseudomonas acidophila)).